The primary structure comprises 652 residues: Carboxypeptidase S1 homolog A (652 aa).

A signal peptide spans M1 to A19. C50 and C121 are oxidised to a cystine. N77, N132, N161, N168, N184, and N202 each carry an N-linked (GlcNAc...) asparagine glycan. The active site involves S238. 4 N-linked (GlcNAc...) asparagine glycosylation sites follow: N260, N299, N347, and N410. Intrachain disulfides connect C325/C361 and C332/C354. D458 is an active-site residue. A substrate-binding site is contributed by C461. 3 N-linked (GlcNAc...) asparagine glycosylation sites follow: N474, N492, and N505. Residue H516 is part of the active site. Residue E517 coordinates substrate. N-linked (GlcNAc...) asparagine glycosylation is present at N594. Positions A608–A628 are disordered. Low complexity predominate over residues T618–A628. G629 is lipidated: GPI-anchor amidated glycine. The propeptide at S630–L652 is removed in mature form.

It belongs to the peptidase S10 family.

The protein resides in the cell membrane. The enzyme catalyses Preferential release of a C-terminal arginine or lysine residue.. Its function is as follows. Extracellular serine carboxypeptidase that contributes to pathogenicity. The polypeptide is Carboxypeptidase S1 homolog A (SCPA) (Trichophyton verrucosum (strain HKI 0517)).